The sequence spans 203 residues: GTP cyclohydrolase 1 (203 aa).

Residues C87, H90, and C158 each coordinate Zn(2+).

Belongs to the GTP cyclohydrolase I family. In terms of assembly, toroid-shaped homodecamer, composed of two pentamers of five dimers.

It catalyses the reaction GTP + H2O = 7,8-dihydroneopterin 3'-triphosphate + formate + H(+). The protein operates within cofactor biosynthesis; 7,8-dihydroneopterin triphosphate biosynthesis; 7,8-dihydroneopterin triphosphate from GTP: step 1/1. In Xylella fastidiosa (strain 9a5c), this protein is GTP cyclohydrolase 1.